An 81-amino-acid chain; its full sequence is MWTFAIVLAFLLIGLDEGEALDGYPLSKNNYCKIYCPNTEVCKDTCKRRAGATDGECRWDGCYCFNVAPDTKMYPGELPCH.

The N-terminal stretch at 1–20 (MWTFAIVLAFLLIGLDEGEA) is a signal peptide. The region spanning 21 to 81 (LDGYPLSKNN…KMYPGELPCH (61 aa)) is the LCN-type CS-alpha/beta domain. Disulfide bonds link C32–C80, C36–C57, C42–C62, and C46–C64.

Belongs to the long (4 C-C) scorpion toxin superfamily. Sodium channel inhibitor family. Beta subfamily. As to expression, expressed by the venom gland.

The protein resides in the secreted. Alpha toxins bind voltage-independently at site-3 of sodium channels (Nav) and inhibit the inactivation of the activated channels, thereby blocking neuronal transmission. This toxin binds, in vitro, to sodium channels and inhibits the inactivation of the activated channels. Seems not toxic to mice, crickets and sweet-water shrimps. This is Toxin TdNa10 from Tityus discrepans (Venezuelan scorpion).